The following is a 1013-amino-acid chain: Endosome/lysosome-associated apoptosis and autophagy regulator 1 (1013 aa).

Residues 1–41 (MAEPGHSHHLSARVRGRTERRIPRLWRLLLWAGTAFQVTQG) form the signal peptide. Residues 42–910 (TGPELHACKE…ICKTIDFWLK (869 aa)) lie on the Extracellular side of the membrane. N-linked (GlcNAc...) asparagine glycosylation occurs at Asn-153. Intrachain disulfides connect Cys-278–Cys-295, Cys-308–Cys-330, and Cys-311–Cys-342. N-linked (GlcNAc...) asparagine glycosylation is found at Asn-404 and Asn-672. One can recognise an MRH domain in the interval 656-858 (NDCTFSRNTP…LWESAAACPL (203 aa)). 4 cysteine pairs are disulfide-bonded: Cys-658–Cys-704, Cys-714–Cys-739, Cys-808–Cys-844, and Cys-820–Cys-856. Residues 911–931 (VGISAGTCTAILLTVLTCYFW) form a helical membrane-spanning segment. Residues 932-1013 (KKNQKLEYKY…TSSGGLDMDL (82 aa)) are Cytoplasmic-facing.

Belongs to the ELAPOR family. Interacts with HSPA5; may regulate the function of HSPA5 in apoptosis and cell proliferation. As to expression, expressed in normal endometrium but overexpressed in endometroid tumors.

It localises to the cell membrane. Its subcellular location is the late endosome membrane. It is found in the golgi apparatus. The protein resides in the trans-Golgi network membrane. The protein localises to the lysosome membrane. It localises to the endoplasmic reticulum membrane. Functionally, may protect cells from cell death by inducing cytosolic vacuolization and up-regulating the autophagy pathway. May play a role in apoptosis and cell proliferation through its interaction with HSPA5. This chain is Endosome/lysosome-associated apoptosis and autophagy regulator 1, found in Homo sapiens (Human).